Here is a 185-residue protein sequence, read N- to C-terminus: UPF0200 protein TON_1344 (185 aa).

ATP is bound at residue 7 to 14 (GMPGSGKS).

This sequence belongs to the UPF0200 family.

This is UPF0200 protein TON_1344 from Thermococcus onnurineus (strain NA1).